A 205-amino-acid polypeptide reads, in one-letter code: Imidazole glycerol phosphate synthase subunit HisH (205 aa).

The region spanning 3–205 (KIGLIDYGMG…LLRRWIKSIQ (203 aa)) is the Glutamine amidotransferase type-1 domain. Cys81 functions as the Nucleophile in the catalytic mechanism. Catalysis depends on residues His185 and Glu187.

Heterodimer of HisH and HisF.

The protein resides in the cytoplasm. The enzyme catalyses 5-[(5-phospho-1-deoxy-D-ribulos-1-ylimino)methylamino]-1-(5-phospho-beta-D-ribosyl)imidazole-4-carboxamide + L-glutamine = D-erythro-1-(imidazol-4-yl)glycerol 3-phosphate + 5-amino-1-(5-phospho-beta-D-ribosyl)imidazole-4-carboxamide + L-glutamate + H(+). It catalyses the reaction L-glutamine + H2O = L-glutamate + NH4(+). It functions in the pathway amino-acid biosynthesis; L-histidine biosynthesis; L-histidine from 5-phospho-alpha-D-ribose 1-diphosphate: step 5/9. IGPS catalyzes the conversion of PRFAR and glutamine to IGP, AICAR and glutamate. The HisH subunit catalyzes the hydrolysis of glutamine to glutamate and ammonia as part of the synthesis of IGP and AICAR. The resulting ammonia molecule is channeled to the active site of HisF. This is Imidazole glycerol phosphate synthase subunit HisH from Prochlorococcus marinus subsp. pastoris (strain CCMP1986 / NIES-2087 / MED4).